A 471-amino-acid chain; its full sequence is WASH complex subunit 1 (471 aa).

The interval 1 to 54 is required for WASH complex assembly; sequence MTPTGTQHSLAGQTYAVPLIQPDLRREEAIQQVADALQYLQKVSGDIFSRISQR. The segment at 1–167 is WHD1; that stretch reads MTPTGTQHSL…EGLGGLPSNI (167 aa). The tract at residues 297-471 is disordered; the sequence is EDGVLTARPP…GEEDEDDWES (175 aa). The segment covering 304-336 has biased composition (pro residues); that stretch reads RPPPPPPPPPPPAPAVLMSVPPPPPPPQAPPGQ. A VCA region spans residues 353 to 471; the sequence is QGAPKEVVDP…GEEDEDDWES (119 aa). A WH2 domain is found at 365 to 387; that stretch reads GRATLLESIRQAGGIGKAKLRSV. Residues 386–402 are compositionally biased toward basic and acidic residues; that stretch reads SVKERKLEKKKQKEQEQ. Residues 428–442 show a composition bias toward gly residues; that stretch reads SGKGPGSGASEGPGG. The span at 462-471 shows a compositional bias: acidic residues; the sequence is GEEDEDDWES.

The protein belongs to the WASH1 family. As to quaternary structure, component of the WASH core complex also described as WASH regulatory complex SHRC composed of WASHC1, WASHC2, WASHC3, WASHC4 and WASHC5. The WASH core complex associates with the F-actin-capping protein dimer (formed by CAPZA1, CAPZA2 or CAPZA3 and CAPZB); the assembly has been initially described as WASH complex. Interacts (via WHD1 region) with WASHC2; the interaction is direct. Interacts with alpha-tubulin. Interacts with BECN1; WASHC1 and AMBRA1 can competitively interact with BECN1. Interacts with BLOC1S2; may associate with the BLOC-1 complex. Interacts with tubulin gamma chain (TUBG1 or TUBG2). Interacts with TBC1D23.

Its subcellular location is the early endosome membrane. The protein resides in the recycling endosome membrane. The protein localises to the late endosome. It is found in the cytoplasmic vesicle. It localises to the autophagosome. Its subcellular location is the cytoplasm. The protein resides in the cytoskeleton. The protein localises to the microtubule organizing center. It is found in the centrosome. It localises to the centriole. In terms of biological role, acts as a component of the WASH core complex that functions as a nucleation-promoting factor (NPF) at the surface of endosomes, where it recruits and activates the Arp2/3 complex to induce actin polymerization, playing a key role in the fission of tubules that serve as transport intermediates during endosome sorting. Involved in endocytic trafficking of EGF. Involved in transferrin receptor recycling. Regulates the trafficking of endosomal alpha5beta1 integrin to the plasma membrane and involved in invasive cell migration. In T-cells involved in endosome-to-membrane recycling of receptors including T-cell receptor (TCR), CD28 and ITGAL; proposed to be implicated in T-cell proliferation and effector function. In dendritic cells involved in endosome-to-membrane recycling of major histocompatibility complex (MHC) class II probably involving retromer and subsequently allowing antigen sampling, loading and presentation during T-cell activation. Involved in negative regulation of autophagy independently from its role in endosomal sorting by inhibiting BECN1 ubiquitination to inactivate PIK3C3/Vps34 activity. The sequence is that of WASH complex subunit 1 from Bos taurus (Bovine).